The primary structure comprises 688 residues: DNA-directed RNA polymerase subunit beta' (688 aa).

Zn(2+)-binding residues include C69, C71, C87, and C90. Mg(2+)-binding residues include D493, D495, and D497.

Belongs to the RNA polymerase beta' chain family. RpoC1 subfamily. In plastids the minimal PEP RNA polymerase catalytic core is composed of four subunits: alpha, beta, beta', and beta''. When a (nuclear-encoded) sigma factor is associated with the core the holoenzyme is formed, which can initiate transcription. Mg(2+) is required as a cofactor. Requires Zn(2+) as cofactor.

The protein resides in the plastid. The protein localises to the chloroplast. It catalyses the reaction RNA(n) + a ribonucleoside 5'-triphosphate = RNA(n+1) + diphosphate. DNA-dependent RNA polymerase catalyzes the transcription of DNA into RNA using the four ribonucleoside triphosphates as substrates. The sequence is that of DNA-directed RNA polymerase subunit beta' from Chloranthus spicatus (Chulantree).